The chain runs to 103 residues: Large ribosomal subunit protein bL21 (103 aa).

This sequence belongs to the bacterial ribosomal protein bL21 family. In terms of assembly, part of the 50S ribosomal subunit. Contacts protein L20.

Its function is as follows. This protein binds to 23S rRNA in the presence of protein L20. This chain is Large ribosomal subunit protein bL21, found in Rhodococcus erythropolis (strain PR4 / NBRC 100887).